The following is an 857-amino-acid chain: DNA mismatch repair protein MutS (857 aa).

613 to 620 (GPNMGGKS) is a binding site for ATP. Residues 797–820 (TSLPHEQPAAHKAKDAPQVPHQSD) are disordered.

This sequence belongs to the DNA mismatch repair MutS family.

Its function is as follows. This protein is involved in the repair of mismatches in DNA. It is possible that it carries out the mismatch recognition step. This protein has a weak ATPase activity. The chain is DNA mismatch repair protein MutS from Pseudomonas putida (strain ATCC 700007 / DSM 6899 / JCM 31910 / BCRC 17059 / LMG 24140 / F1).